Here is a 98-residue protein sequence, read N- to C-terminus: uncharacterized protein (98 aa).

Residues 10 to 30 traverse the membrane as a helical segment; the sequence is LYGFFAVTGVLIASFIIGEIV.

Its subcellular location is the host membrane. This is an uncharacterized protein from Saccharolobus islandicus (Sulfolobus islandicus).